A 259-amino-acid chain; its full sequence is MIKEFEKNEKVKNVVLNYYYTKVINSPIFNEAQKSLVRKKAVEESAEMFQKLAEKKKEILISPQKIQEILKNKREDKDEKVNVAVCDGEIFYNGKSVVEISIPEESVKKTVIAIKDYIELSTETSEEHRFLTGEAIIFSFYSVFLKEVREKATELMKDINKFPVFSLLIGTPKAGKTTLLNFIAKLLGTEKIYYGKLKETRNSKANTFEAILYIDNRMPVLIDEVPPEHLRDKRALGSKLKAKGIEWRLGSKKRSYVNQ.

This is an uncharacterized protein from Aquifex aeolicus (strain VF5).